A 253-amino-acid polypeptide reads, in one-letter code: Major prion protein (253 aa).

An N-terminal signal peptide occupies residues 1–22 (MANLGCWMLVLFVATWSDLGLC). The segment at 23-230 (KKRPKPGGWN…ESQAYYQRGS (208 aa)) is interaction with GRB2, ERI3 and SYN1. The disordered stretch occupies residues 26 to 108 (PKPGGWNTGG…WNKPSKPKTN (83 aa)). 5 repeat units span residues 51–59 (PQGGGGWGQ), 60–67 (PHGGGWGQ), 68–75 (PHGGGWGQ), 76–83 (PHGGGWGQ), and 84–91 (PHGGGWGQ). Residues 51–91 (PQGGGGWGQPHGGGWGQPHGGGWGQPHGGGWGQPHGGGWGQ) are 5 X 8 AA tandem repeats of P-H-G-G-G-W-G-Q. The span at 52-95 (QGGGGWGQPHGGGWGQPHGGGWGQPHGGGWGQPHGGGWGQGGGT) shows a compositional bias: gly residues. Cu(2+)-binding residues include histidine 61, glycine 62, glycine 63, histidine 69, glycine 70, glycine 71, histidine 77, glycine 78, glycine 79, histidine 85, glycine 86, and glycine 87. Cysteine 179 and cysteine 214 are oxidised to a cystine. Residues asparagine 181 and asparagine 197 are each glycosylated (N-linked (GlcNAc...) asparagine). Residue serine 230 is the site of GPI-anchor amidated serine attachment. A propeptide spans 231-253 (SMVLFSSPPVILLISFLIFLIVG) (removed in mature form).

Belongs to the prion family. Monomer and homodimer. Has a tendency to aggregate into amyloid fibrils containing a cross-beta spine, formed by a steric zipper of superposed beta-strands. Soluble oligomers may represent an intermediate stage on the path to fibril formation. Copper binding may promote oligomerization. Interacts with GRB2, APP, ERI3/PRNPIP and SYN1. Mislocalized cytosolically exposed PrP interacts with MGRN1; this interaction alters MGRN1 subcellular location and causes lysosomal enlargement. Interacts with KIAA1191.

It localises to the cell membrane. It is found in the golgi apparatus. Its primary physiological function is unclear. Has cytoprotective activity against internal or environmental stresses. May play a role in neuronal development and synaptic plasticity. May be required for neuronal myelin sheath maintenance. May play a role in iron uptake and iron homeostasis. Soluble oligomers are toxic to cultured neuroblastoma cells and induce apoptosis (in vitro). Association with GPC1 (via its heparan sulfate chains) targets PRNP to lipid rafts. Also provides Cu(2+) or Zn(2+) for the ascorbate-mediated GPC1 deaminase degradation of its heparan sulfate side chains. This chain is Major prion protein (PRNP), found in Hylobates lar (Lar gibbon).